A 353-amino-acid polypeptide reads, in one-letter code: Envelope glycoprotein M (353 aa).

Topologically, residues 1 to 27 (MAKAGVMTLSHVDRMNLRTWTMAIACC) are intravirion. A helical transmembrane segment spans residues 28-48 (LLSFVNIVVFSVAAHFPGIGF). Residues 49–82 (PCYYPRIIDFDNMNLTMYNAIHHLTPQLFLDPVQ) lie on the Virion surface side of the membrane. A helical membrane pass occupies residues 83–103 (LIVYVIFTELIFFCVLSYYIV). The Intravirion portion of the chain corresponds to 104-132 (CWVQIYFRSEHGTQVNQSTRDINFMGDSA). A helical membrane pass occupies residues 133-153 (TCFTFVLTMDTFQIFLLSLSF). The Virion surface portion of the chain corresponds to 154 to 157 (RLPS). A helical membrane pass occupies residues 158–178 (MVAFSKCMYFMCLTAFVVTLV). Residues 179–210 (THYESRERSAFALSKIHPKLQGTIRYRTAVVN) are Intravirion-facing. Residues 211 to 231 (LTQLILGFATMVLAMSLALGF) form a helical membrane-spanning segment. The Virion surface portion of the chain corresponds to 232–240 (GNSFFVKTA). Residues 241–261 (HVVFGAMVAFAIVACVYFSII) traverse the membrane as a helical segment. Residues 262-270 (ESVLSRYMK) lie on the Intravirion side of the membrane. Residues 271 to 291 (VQFGYHIGTILGVCGAMYPII) traverse the membrane as a helical segment. Residues 292–304 (RYEALNASSYARD) lie on the Virion surface side of the membrane. A helical membrane pass occupies residues 305–325 (INIGITVLLLLCVAFSVIRTV). Topologically, residues 326–353 (RFLLRRNKRYRALALDNEEIRALRSDAE) are intravirion.

It belongs to the herpesviridae glycoprotein M family. As to quaternary structure, interacts (via N-terminus) with gN (via N-terminus). The gM-gN heterodimer forms the gCII complex.

It is found in the virion membrane. Its subcellular location is the host Golgi apparatus. The protein resides in the host trans-Golgi network. It localises to the host endosome membrane. The protein localises to the host nucleus inner membrane. Envelope glycoprotein important for virion assembly and egress. Plays a role in the correct incorporation of gH-gL into virion membrane. Directs the glycoprotein N (gN) to the host trans-Golgi network. The polypeptide is Envelope glycoprotein M (Mus musculus (Mouse)).